Consider the following 571-residue polypeptide: Potassium-transporting ATPase potassium-binding subunit (571 aa).

The next 10 membrane-spanning stretches (helical) occupy residues 7–27 (LQFA…GGYL), 66–86 (TYAL…YGIA), 137–157 (GLAV…AALI), 188–208 (FVVA…GFIV), 255–275 (IGNF…CFAF), 286–306 (WAVL…AMSF), 390–410 (VGLN…GLMV), 430–450 (TLYI…SVLI), 497–517 (IGVA…AIAG), and 538–558 (LFVG…FFPA).

This sequence belongs to the KdpA family. The system is composed of three essential subunits: KdpA, KdpB and KdpC.

The protein localises to the cell membrane. Functionally, part of the high-affinity ATP-driven potassium transport (or Kdp) system, which catalyzes the hydrolysis of ATP coupled with the electrogenic transport of potassium into the cytoplasm. This subunit binds the extracellular potassium ions and delivers the ions to the membrane domain of KdpB through an intramembrane tunnel. This chain is Potassium-transporting ATPase potassium-binding subunit, found in Mycobacterium bovis (strain ATCC BAA-935 / AF2122/97).